Reading from the N-terminus, the 393-residue chain is DNA polymerase processivity factor (393 aa).

3 disordered regions span residues 25–50, 311–339, and 355–393; these read EMER…REPP, ESRF…ALAS, and KNGT…RCVV. Residues 31-41 are compositionally biased toward basic residues; it reads RDHHRDHRDHR. The segment covering 311–333 has biased composition (basic and acidic residues); that stretch reads ESRFERMGKQDDGKGDRSHKNDD.

Belongs to the herpesviridae polymerase accessory protein family.

Its function is as follows. Accessory subunit of the DNA polymerase that acts to increase the processivity of polymerization. The chain is DNA polymerase processivity factor (U27) from Human herpesvirus 6A (strain Uganda-1102) (HHV-6 variant A).